The sequence spans 363 residues: Transcription factor PIF6 (363 aa).

Disordered stretches follow at residues 154–204 and 340–363; these read SEGS…RNDI and IPNP…KTNR. The span at 178 to 188 shows a compositional bias: basic residues; the sequence is RTRKALVKRKR. Residues 188-237 form the bHLH domain; it reads RNAEAYNSPERNQRNDINKKMRTLQNLLPNSHKDDNESMLDEAINYMTNL. The span at 340–350 shows a compositional bias: polar residues; the sequence is IPNPNSLSNLD. The segment covering 354–363 has biased composition (basic residues); the sequence is LHKKSRKTNR.

In terms of assembly, homodimer. Interacts with APRR1/TOC1. Binds to RGL2 and RGA. Associates to PTAC12/HMR/PAP5 which acts as a transcriptional coactivator. As to expression, mainly expressed in fruits and flowers and, to a lower extent, in leaves, stems, seedlings and roots.

It localises to the nucleus. Transcription factor. This Arabidopsis thaliana (Mouse-ear cress) protein is Transcription factor PIF6.